We begin with the raw amino-acid sequence, 1356 residues long: Probable aldehyde oxidase 3 (1356 aa).

Residues 10–97 (RAVVVAVNGE…HCAVTTSEGI (88 aa)) form the 2Fe-2S ferredoxin-type domain. 4 residues coordinate [2Fe-2S] cluster: C49, C54, C57, and C79. The FAD-binding PCMH-type domain occupies 245–437 (VVVTGDGWFH…TFQTFRAAPR (193 aa)). Residues 552-576 (NGSFTNGTANGIVDSSPEKHSNVDS) are disordered.

Belongs to the xanthine dehydrogenase family. Aldehyde oxidases (AO) are homodimers and heterodimers of AO subunits. [2Fe-2S] cluster serves as cofactor. Requires FAD as cofactor. Mo-molybdopterin is required as a cofactor.

It catalyses the reaction an aldehyde + O2 + H2O = a carboxylate + H2O2 + H(+). The sequence is that of Probable aldehyde oxidase 3 from Oryza sativa subsp. japonica (Rice).